We begin with the raw amino-acid sequence, 705 residues long: Kinesin-like protein KIF2A (705 aa).

Residues 65–185 (DLVPDEDIEP…QQELREKRAQ (121 aa)) form a disordered region. At Ser75 the chain carries Phosphoserine. A Phosphothreonine modification is found at Thr96. Ser99 bears the Phosphoserine mark. N6-acetyllysine is present on Lys101. Residues 122 to 139 (LPEQSSSAQQNGSVSDIS) show a composition bias toward polar residues. Phosphoserine is present on residues Ser134 and Ser139. The stretch at 153–186 (RRKSNCVKEVEKLQEKREKRRLQQQELREKRAQD) forms a coiled coil. The segment covering 158-185 (CVKEVEKLQEKREKRRLQQQELREKRAQ) has biased composition (basic and acidic residues). Residues 222–552 (RICVCVRKRP…LRYANRVKEL (331 aa)) enclose the Kinesin motor domain. 312–319 (GQTGSGKT) contacts ATP. Position 572 is a phosphoserine (Gln572). Residues 659 to 698 (ATQLEAILEQKIDILTELRDKVKSFRAALQEEEQASKQIN) adopt a coiled-coil conformation.

Belongs to the TRAFAC class myosin-kinesin ATPase superfamily. Kinesin family. MCAK/KIF2 subfamily. Interacts with AURKA and PLK1. Interacts with PSRC1. Interacts with MCRS1; the interaction enhances recruitment of KIF2A to the minus ends of spindle microtubules which promotes chromosome alignment.

It is found in the cytoplasm. Its subcellular location is the cytoskeleton. The protein resides in the microtubule organizing center. It localises to the centrosome. The protein localises to the spindle pole. It is found in the spindle. Its function is as follows. Plus end-directed microtubule-dependent motor required for normal brain development. May regulate microtubule dynamics during axonal growth. Required for normal progression through mitosis. Required for normal congress of chromosomes at the metaphase plate. Required for normal spindle dynamics during mitosis. Promotes spindle turnover. Implicated in formation of bipolar mitotic spindles. Has microtubule depolymerization activity. This is Kinesin-like protein KIF2A from Rattus norvegicus (Rat).